The following is a 981-amino-acid chain: RNA polymerase II assembly factor RTP1 (981 aa).

HEAT repeat units lie at residues 64–101, 161–199, 226–261, 366–403, 609–646, 655–692, 765–799, 800–836, and 945–980; these read SNNN…LLPI, DTLS…ILLG, YTLF…RRPE, KELN…TTPG, KDVL…GEET, SSYK…KLQS, ISLE…LCEL, EPET…NYIQ, and EYNY…VLDS. Positions 630-651 are enriched in acidic residues; it reads QEVEADSDDEVEEGEETEELDP. The tract at residues 630-652 is disordered; it reads QEVEADSDDEVEEGEETEELDPN.

The protein belongs to the Tango6 family. As to quaternary structure, interacts with RNA polymerase II subunits RPB2 and RPB3. Interacts with the R2TP complex. Interacts with the nuclear pore complex subunits NUP100 and NUP116.

The protein resides in the cytoplasm. Required for the cytoplasmic assembly and the nuclear import of RNA polymerase II. May facilitate the starting interaction between RNA polymerase II subunits RPB2 and RPB3 and the subsequent interaction of the resulting complex with subunit RPB1. May also participate in the transport of RNA polymerase II through the nuclear pore complex. The polypeptide is RNA polymerase II assembly factor RTP1 (Saccharomyces cerevisiae (strain ATCC 204508 / S288c) (Baker's yeast)).